Consider the following 615-residue polypeptide: Increased rDNA silencing protein 4 (615 aa).

Disordered stretches follow at residues 38 to 135, 152 to 260, 277 to 304, and 323 to 445; these read SNEV…SSHS, LLGI…NRSQ, PSIA…NYSS, and KPKH…NEDK. Polar residues predominate over residues 50–65; it reads VSRNPQTRLSEPSLQK. 2 stretches are compositionally biased toward low complexity: residues 121–135 and 157–168; these read HSQS…SSHS and SRSSSRNGSNES. S180 carries the phosphoserine modification. Residues 184 to 198 are compositionally biased toward low complexity; that stretch reads LLTSFSSGRRLSSSS. The segment covering 248-260 has biased composition (polar residues); sequence NPDTSDVISNRSQ. The segment covering 281–290 has biased composition (low complexity); sequence SSNTTTTTSN. Residues 365–377 show a composition bias toward basic and acidic residues; sequence ENDHASSLHEGNL. Residues 389–402 show a composition bias toward acidic residues; sequence DVYDDTDSDSESDQ. The segment covering 409–438 has biased composition (basic residues); the sequence is KPRKRDRIKRKIRNSANKTAHHRPIHRTRD. The 112-residue stretch at 460-571 folds into the EH domain; the sequence is ERKRYESMWV…QCVWDSVDRY (112 aa).

The protein belongs to the IRS4 family. Interacts with INP51.

Its function is as follows. With TAX4, acts as a positive regulator of INP51 activity and phosphatidylinositol 4,5-bisphosphate turnover. Negatively regulates signaling through the cell integrity pathway, including the MAP kinase SLT2. Also seems to be involved in rDNA silencing. This Saccharomyces cerevisiae (strain ATCC 204508 / S288c) (Baker's yeast) protein is Increased rDNA silencing protein 4 (IRS4).